The primary structure comprises 353 residues: Probable dual-specificity RNA methyltransferase RlmN (353 aa).

Glu95 (proton acceptor) is an active-site residue. Residues 103–333 (DGGRKTICIS…PILNRRSPGR (231 aa)) enclose the Radical SAM core domain. Cys110 and Cys339 are joined by a disulfide. 3 residues coordinate [4Fe-4S] cluster: Cys117, Cys121, and Cys124. S-adenosyl-L-methionine is bound by residues 164 to 165 (GE), Ser196, 219 to 221 (SLN), and Asn296. Residue Cys339 is the S-methylcysteine intermediate of the active site.

This sequence belongs to the radical SAM superfamily. RlmN family. It depends on [4Fe-4S] cluster as a cofactor.

The protein localises to the cytoplasm. It catalyses the reaction adenosine(2503) in 23S rRNA + 2 reduced [2Fe-2S]-[ferredoxin] + 2 S-adenosyl-L-methionine = 2-methyladenosine(2503) in 23S rRNA + 5'-deoxyadenosine + L-methionine + 2 oxidized [2Fe-2S]-[ferredoxin] + S-adenosyl-L-homocysteine. It carries out the reaction adenosine(37) in tRNA + 2 reduced [2Fe-2S]-[ferredoxin] + 2 S-adenosyl-L-methionine = 2-methyladenosine(37) in tRNA + 5'-deoxyadenosine + L-methionine + 2 oxidized [2Fe-2S]-[ferredoxin] + S-adenosyl-L-homocysteine. Its function is as follows. Specifically methylates position 2 of adenine 2503 in 23S rRNA and position 2 of adenine 37 in tRNAs. The sequence is that of Probable dual-specificity RNA methyltransferase RlmN from Leptospira biflexa serovar Patoc (strain Patoc 1 / Ames).